We begin with the raw amino-acid sequence, 208 residues long: ATP-dependent Clp protease proteolytic subunit 1 (208 aa).

S108 serves as the catalytic Nucleophile. The active site involves H133.

The protein belongs to the peptidase S14 family. Fourteen ClpP subunits assemble into 2 heptameric rings which stack back to back to give a disk-like structure with a central cavity, resembling the structure of eukaryotic proteasomes.

It is found in the cytoplasm. It catalyses the reaction Hydrolysis of proteins to small peptides in the presence of ATP and magnesium. alpha-casein is the usual test substrate. In the absence of ATP, only oligopeptides shorter than five residues are hydrolyzed (such as succinyl-Leu-Tyr-|-NHMec, and Leu-Tyr-Leu-|-Tyr-Trp, in which cleavage of the -Tyr-|-Leu- and -Tyr-|-Trp bonds also occurs).. Cleaves peptides in various proteins in a process that requires ATP hydrolysis. Has a chymotrypsin-like activity. Plays a major role in the degradation of misfolded proteins. The sequence is that of ATP-dependent Clp protease proteolytic subunit 1 from Corynebacterium efficiens (strain DSM 44549 / YS-314 / AJ 12310 / JCM 11189 / NBRC 100395).